An 81-amino-acid polypeptide reads, in one-letter code: Costars family protein ABRACL (81 aa).

The protein belongs to the costars family.

This is Costars family protein ABRACL from Coturnix coturnix (Common quail).